A 266-amino-acid chain; its full sequence is Diphthine synthase (266 aa).

Residues L9, D85, I88, 113–114 (TA), L168, A210, and H235 contribute to the S-adenosyl-L-methionine site.

Belongs to the diphthine synthase family. In terms of assembly, homodimer.

It carries out the reaction 2-[(3S)-amino-3-carboxypropyl]-L-histidyl-[translation elongation factor 2] + 3 S-adenosyl-L-methionine = diphthine-[translation elongation factor 2] + 3 S-adenosyl-L-homocysteine + 3 H(+). It participates in protein modification; peptidyl-diphthamide biosynthesis. Its function is as follows. S-adenosyl-L-methionine-dependent methyltransferase that catalyzes the trimethylation of the amino group of the modified target histidine residue in translation elongation factor 2 (EF-2), to form an intermediate called diphthine. The three successive methylation reactions represent the second step of diphthamide biosynthesis. This is Diphthine synthase from Natronomonas pharaonis (strain ATCC 35678 / DSM 2160 / CIP 103997 / JCM 8858 / NBRC 14720 / NCIMB 2260 / Gabara) (Halobacterium pharaonis).